The primary structure comprises 360 residues: DNA replication and repair protein RecF (360 aa).

ATP is bound at residue 33–40 (GENGSGKT).

Belongs to the RecF family.

It is found in the cytoplasm. Functionally, the RecF protein is involved in DNA metabolism; it is required for DNA replication and normal SOS inducibility. RecF binds preferentially to single-stranded, linear DNA. It also seems to bind ATP. The protein is DNA replication and repair protein RecF of Rickettsia canadensis (strain McKiel).